Consider the following 310-residue polypeptide: MFQHTTVLLKEAVDGLNIRPDGIYVDCTLGSGGHSEYLLSRLSEHGKLFAFDQDEAAIMHARERLARYGRQVQFVHRNFRFLQEELSALGVKSVDGVLFDLGVSSPQLDEPERGFSYQHDAPLDMRMNRKQRLTAAEIVNCWPYEELVRIFFRYGEERFSKQVARKIEEVRRTRPIKTTGELVDVIKAAIPAPARRSGGHPAKRIFQALRIAVNDELEAFREALEQAIELLAPGGRVSVITFHSLEDRICKETFKKASESPPLPPGLPVLPDDYRPVLKIITKKPIVPSEEELERNHRARSAKLRIAEKL.

S-adenosyl-L-methionine is bound by residues 32–34 (GGH), D52, F79, D100, and Q107.

It belongs to the methyltransferase superfamily. RsmH family.

The protein localises to the cytoplasm. It carries out the reaction cytidine(1402) in 16S rRNA + S-adenosyl-L-methionine = N(4)-methylcytidine(1402) in 16S rRNA + S-adenosyl-L-homocysteine + H(+). Specifically methylates the N4 position of cytidine in position 1402 (C1402) of 16S rRNA. The protein is Ribosomal RNA small subunit methyltransferase H of Geobacillus kaustophilus (strain HTA426).